Here is a 461-residue protein sequence, read N- to C-terminus: Mannose-6-phosphate isomerase (461 aa).

Gln-107, His-109, Glu-134, and His-291 together coordinate Zn(2+). The active site involves Arg-310.

This sequence belongs to the mannose-6-phosphate isomerase type 1 family. Requires Zn(2+) as cofactor.

The protein resides in the cytoplasm. The enzyme catalyses D-mannose 6-phosphate = D-fructose 6-phosphate. It participates in nucleotide-sugar biosynthesis; GDP-alpha-D-mannose biosynthesis; alpha-D-mannose 1-phosphate from D-fructose 6-phosphate: step 1/2. In terms of biological role, involved in the synthesis of the GDP-mannose and dolichol-phosphate-mannose required for a number of critical mannosyl transfer reactions. In Emericella nidulans (strain FGSC A4 / ATCC 38163 / CBS 112.46 / NRRL 194 / M139) (Aspergillus nidulans), this protein is Mannose-6-phosphate isomerase (manA).